A 120-amino-acid polypeptide reads, in one-letter code: NAD(P)H-quinone oxidoreductase subunit 3, chloroplastic (120 aa).

3 helical membrane passes run 9–29 (IFWTFLIIASLIPILVFWISG), 64–84 (MFALVFVVFDVETVFLYPWAM), and 88–108 (VLGVSVFIEAFIFVLILVVGL).

This sequence belongs to the complex I subunit 3 family. NDH is composed of at least 16 different subunits, 5 of which are encoded in the nucleus.

Its subcellular location is the plastid. The protein localises to the chloroplast thylakoid membrane. It carries out the reaction a plastoquinone + NADH + (n+1) H(+)(in) = a plastoquinol + NAD(+) + n H(+)(out). The catalysed reaction is a plastoquinone + NADPH + (n+1) H(+)(in) = a plastoquinol + NADP(+) + n H(+)(out). NDH shuttles electrons from NAD(P)H:plastoquinone, via FMN and iron-sulfur (Fe-S) centers, to quinones in the photosynthetic chain and possibly in a chloroplast respiratory chain. The immediate electron acceptor for the enzyme in this species is believed to be plastoquinone. Couples the redox reaction to proton translocation, and thus conserves the redox energy in a proton gradient. This Zea mays (Maize) protein is NAD(P)H-quinone oxidoreductase subunit 3, chloroplastic.